The following is a 268-amino-acid chain: Protein CONTINUOUS VASCULAR RING 1 (268 aa).

The Cytoplasmic portion of the chain corresponds to 1–70 (MGDEKPVIVM…GWASKKFMTG (70 aa)). The segment at 21-48 (IPVADSGDKDDGSSSKPSSSSSASSSSH) is disordered. Positions 34–48 (SSKPSSSSSASSSSH) are enriched in low complexity. The chain crosses the membrane as a helical span at residues 71–91 (CVILLPIAITFYITWWFIHFV). The Extracellular portion of the chain corresponds to 92 to 103 (DGFFSPIYAQLG). Residues 104-124 (INVFGFGFLTSIAFIFLVGVF) form a helical membrane-spanning segment. Topologically, residues 125–268 (MSSWLGASVL…LASIDRATSL (144 aa)) are cytoplasmic.

Belongs to the plant COV1 protein family. In terms of tissue distribution, mostly expressed in flowers and stems, and, to a lower extent, in roots and leaves.

It is found in the membrane. Its function is as follows. Involved in the regulation of vascular patterning in the stem, probably by negatively regulating the differentiation of vascular tissue. The protein is Protein CONTINUOUS VASCULAR RING 1 of Arabidopsis thaliana (Mouse-ear cress).